The chain runs to 234 residues: MAQLDTQKIISTIANSKKTTPVKVYLKGKLSELHFPKSVHAFIGKHTGTVIGDWAEIKPILKKAKLDDYYVETAGRNTGVPLLDIKAANARIEPGAIIRDQVLIGDNAVIMMGAIINIGAEIGAGTMIDMGAVLGGRAIVGKHCHIGAGTVLAGVVEPPSAKPVTIGDHVMIGANAVVLEGTTVGEGAVIAAGAVVINDVPAHTVVAGVPAKVIKQVNDQTEAKTVLLDELRKL.

Belongs to the transferase hexapeptide repeat family. DapH subfamily.

It catalyses the reaction (S)-2,3,4,5-tetrahydrodipicolinate + acetyl-CoA + H2O = L-2-acetamido-6-oxoheptanedioate + CoA. Its pathway is amino-acid biosynthesis; L-lysine biosynthesis via DAP pathway; LL-2,6-diaminopimelate from (S)-tetrahydrodipicolinate (acetylase route): step 1/3. Its function is as follows. Catalyzes the transfer of an acetyl group from acetyl-CoA to tetrahydrodipicolinate. The protein is 2,3,4,5-tetrahydropyridine-2,6-dicarboxylate N-acetyltransferase of Lacticaseibacillus casei (strain BL23) (Lactobacillus casei).